The following is a 174-amino-acid chain: Non-classical export protein 2 homolog 1 (174 aa).

Residues 1–7 (MLSAADN) are Cytoplasmic-facing. The helical transmembrane segment at 8–28 (LVRIINAVFLIISIGLISGLI) threads the bilayer. The Extracellular segment spans residues 29 to 41 (GTQTKHSSRVNFC). The helical transmembrane segment at 42 to 62 (MFAAVYGLVTDSLYGFLANFW) threads the bilayer. The Cytoplasmic segment spans residues 63 to 69 (TSLTYPA). Residues 70-90 (ILLVLDFLNFIFTFVAATALA) traverse the membrane as a helical segment. The Extracellular segment spans residues 91–122 (VGIRCHSCKNKTYLEQNKIIQGSSSRCHQSQA). A helical membrane pass occupies residues 123–143 (AVAFFYFSCFLFLIKVTVATM). Over 144 to 174 (GMMQNGGFGSNTGFSRRRARRQMGIPTISQV) the chain is Cytoplasmic.

It belongs to the NCE102 family.

The protein localises to the cell membrane. In terms of biological role, involved in membrane organization. Required for the formation of membrane compartments of CAN1 (MCCs), localization of CAN1 at the MCCs and subsequent invagination of the plasma membrane at the MCCs sites. Involved in eisosome organization and might act as a sensor of sphingolipids that regulates plasma membrane function. Involved in a novel pathway of export of proteins that lack a cleavable signal sequence. Non-classical export pathway also functions as an alternative clearance/detoxification pathway to eliminate damaged material, when the basic repair pathway is not sufficient. The polypeptide is Non-classical export protein 2 homolog 1 (FHN1) (Saccharomyces cerevisiae (strain ATCC 204508 / S288c) (Baker's yeast)).